Consider the following 174-residue polypeptide: Magnetosome protein MamT (174 aa).

Residues 1–9 (MGTPGGGRR) are Cytoplasmic-facing. The chain crosses the membrane as a helical span at residues 10–28 (WMTLISITLLMVVGLGLYW). At 29-174 (DELSLSAGIS…EKKSGIKWLL (146 aa)) the chain is on the lumenal side. Residues 87–107 (VMPGTGMPHPYVGDCIQCHLM) carry the MCR (magnetochrome) 1 motif. 6 residues coordinate heme: C101, C104, H105, C152, C155, and H156. Residues 138 to 158 (ILPTTRQPHPPAGRCIKCHDI) carry the MCR 2 motif.

The protein belongs to the magnetosome MamT family. Heme serves as cofactor.

It localises to the magnetosome membrane. Its function is as follows. May play a role in magnetite crystal maturation. May transfer electrons to balance the Fe(2+)-Fe(3+) ratio during magnetite formation. This chain is Magnetosome protein MamT, found in Magnetospirillum gryphiswaldense (strain DSM 6361 / JCM 21280 / NBRC 15271 / MSR-1).